The chain runs to 852 residues: DNA mismatch repair protein MutS (852 aa).

602–609 is an ATP binding site; it reads GPNMSGKS.

Belongs to the DNA mismatch repair MutS family.

In terms of biological role, this protein is involved in the repair of mismatches in DNA. It is possible that it carries out the mismatch recognition step. This protein has a weak ATPase activity. This Streptococcus thermophilus (strain CNRZ 1066) protein is DNA mismatch repair protein MutS.